The sequence spans 423 residues: UPF0229 protein Pput_0430 (423 aa).

The disordered stretch occupies residues 81–108 (EFTAGEHIPRPQGGGGGGGRGKAGNSGE). The span at 92 to 107 (QGGGGGGGRGKAGNSG) shows a compositional bias: gly residues.

It belongs to the UPF0229 family.

The chain is UPF0229 protein Pput_0430 from Pseudomonas putida (strain ATCC 700007 / DSM 6899 / JCM 31910 / BCRC 17059 / LMG 24140 / F1).